Reading from the N-terminus, the 158-residue chain is Cyclic pyranopterin monophosphate synthase (158 aa).

Residues 74 to 76 (MCH) and 112 to 113 (ME) each bind substrate. Residue D127 is part of the active site.

Belongs to the MoaC family. In terms of assembly, homohexamer; trimer of dimers.

The catalysed reaction is (8S)-3',8-cyclo-7,8-dihydroguanosine 5'-triphosphate = cyclic pyranopterin phosphate + diphosphate. Its pathway is cofactor biosynthesis; molybdopterin biosynthesis. In terms of biological role, catalyzes the conversion of (8S)-3',8-cyclo-7,8-dihydroguanosine 5'-triphosphate to cyclic pyranopterin monophosphate (cPMP). In Helicobacter pylori (strain G27), this protein is Cyclic pyranopterin monophosphate synthase.